The chain runs to 310 residues: MSNKNKKIVQGEEDEEEDDLYDDYDDKPKTTTTTTTSTSMNKSDSNISLNKEMLINDHPEDLIVGANSPLNVSVTTTPIENINENPSPVNLDEQTQQTQPQQNPISPITPLSSSSPSSSTTTTTITNSAVSPSNILITPTQSPIEIKPIIETQQPLPSPPQQGPSPIILQHQQQQQPLQSQYITPPIPQPQYQPIASQQSQQPQQIPTRKLSGSQMLPQRIPLSLGENKLKEFNENLRKSYCTKTHMLYYSINKEVSGANQHLTGVIDLIKSVQHNIRQYNDDILTLEEKLEQTEWSLQYYFNNNSNNNS.

Disordered stretches follow at residues methionine 1 to methionine 53, proline 78 to asparagine 127, and glutamine 153 to leucine 217. Residues glycine 11–aspartate 25 show a composition bias toward acidic residues. Polar residues-rich tracts occupy residues serine 37–leucine 49 and proline 78–proline 88. 3 stretches are compositionally biased toward low complexity: residues glutamine 94 to threonine 126, proline 164 to threonine 184, and tyrosine 192 to threonine 208. Residues aspartate 268–glutamine 299 adopt a coiled-coil conformation.

This is an uncharacterized protein from Dictyostelium discoideum (Social amoeba).